The sequence spans 214 residues: Killer cell lectin-like receptor subfamily B member 1 (214 aa).

Over Met-1–Lys-42 the chain is Cytoplasmic. The chain crosses the membrane as a helical; Signal-anchor for type II membrane protein span at residues Leu-43–Val-63. Over Gln-64 to Val-214 the chain is Extracellular. Positions His-98 to Gln-208 constitute a C-type lectin domain. 2 cysteine pairs are disulfide-bonded: Cys-119–Cys-207 and Cys-186–Cys-199.

The protein resides in the membrane. The chain is Killer cell lectin-like receptor subfamily B member 1 (Klrb1) from Rattus norvegicus (Rat).